Reading from the N-terminus, the 37-residue chain is Large ribosomal subunit protein bL36c (37 aa).

The protein belongs to the bacterial ribosomal protein bL36 family.

The protein resides in the plastid. It localises to the chloroplast. The protein is Large ribosomal subunit protein bL36c of Physcomitrium patens (Spreading-leaved earth moss).